The primary structure comprises 358 residues: NADH-quinone oxidoreductase subunit H (358 aa).

Helical transmembrane passes span 20 to 40 (ITVG…IPLI), 95 to 115 (ALFY…WAVI), 128 to 148 (IGLL…IIAG), 168 to 188 (ISYE…SGSM), 206 to 226 (VFSW…ISAV), 253 to 273 (GFAF…ISAL), 290 to 310 (WGFI…AVLY), and 334 to 354 (VLIP…ISPL).

It belongs to the complex I subunit 1 family. In terms of assembly, NDH-1 is composed of 14 different subunits. Subunits NuoA, H, J, K, L, M, N constitute the membrane sector of the complex.

The protein localises to the cell inner membrane. The catalysed reaction is a quinone + NADH + 5 H(+)(in) = a quinol + NAD(+) + 4 H(+)(out). In terms of biological role, NDH-1 shuttles electrons from NADH, via FMN and iron-sulfur (Fe-S) centers, to quinones in the respiratory chain. The immediate electron acceptor for the enzyme in this species is believed to be ubiquinone. Couples the redox reaction to proton translocation (for every two electrons transferred, four hydrogen ions are translocated across the cytoplasmic membrane), and thus conserves the redox energy in a proton gradient. This subunit may bind ubiquinone. In Neisseria meningitidis serogroup C (strain 053442), this protein is NADH-quinone oxidoreductase subunit H.